We begin with the raw amino-acid sequence, 572 residues long: Urease subunit alpha (572 aa).

In terms of domain architecture, Urease spans 132 to 572 (GGFDSHIHFI…LPMAQRYFMY (441 aa)). The Ni(2+) site is built by His137, His139, and Lys220. Lys220 carries the post-translational modification N6-carboxylysine. His222 contributes to the substrate binding site. The Ni(2+) site is built by His249 and His275. Catalysis depends on His323, which acts as the Proton donor. Asp363 lines the Ni(2+) pocket.

It belongs to the metallo-dependent hydrolases superfamily. Urease alpha subunit family. Heterotrimer of UreA (gamma), UreB (beta) and UreC (alpha) subunits. Three heterotrimers associate to form the active enzyme. Ni cation is required as a cofactor. In terms of processing, carboxylation allows a single lysine to coordinate two nickel ions.

Its subcellular location is the cytoplasm. The enzyme catalyses urea + 2 H2O + H(+) = hydrogencarbonate + 2 NH4(+). It participates in nitrogen metabolism; urea degradation; CO(2) and NH(3) from urea (urease route): step 1/1. This Bradyrhizobium diazoefficiens (strain JCM 10833 / BCRC 13528 / IAM 13628 / NBRC 14792 / USDA 110) protein is Urease subunit alpha.